Here is a 1894-residue protein sequence, read N- to C-terminus: Plexin-A1 (1894 aa).

An N-terminal signal peptide occupies residues 1-27 (MPLPPLSSRTLLLLLLLLLRGVWIAIS). Residues 28-510 (SPPAGLGPQP…TEKQVTQVPV (483 aa)) enclose the Sema domain. Topologically, residues 28 to 1242 (SPPAGLGPQP…VYSDSLLTLP (1215 aa)) are extracellular. Residue Asn-75 is glycosylated (N-linked (GlcNAc...) asparagine). Intrachain disulfides connect Cys-93–Cys-102, Cys-128–Cys-136, Cys-284–Cys-405, Cys-300–Cys-356, Cys-374–Cys-393, Cys-513–Cys-530, Cys-519–Cys-561, Cys-522–Cys-539, Cys-533–Cys-545, and Cys-596–Cys-615. Asn-658, Asn-670, and Asn-699 each carry an N-linked (GlcNAc...) asparagine glycan. 4 consecutive IPT/TIG domains span residues 862-957 (PKIL…FTFV), 959-1043 (PTFY…YNYT), 1046-1145 (PTIL…FLYY), and 1148-1234 (PVLE…LQVY). The N-linked (GlcNAc...) asparagine glycan is linked to Asn-1041. Residues Asn-1185 and Asn-1210 are each glycosylated (N-linked (GlcNAc...) asparagine). A helical transmembrane segment spans residues 1243–1263 (AIVGIGGGGGLLLLVIVAVLI). Residues 1262–1315 (LIAYKRKSRDADRTLKRLQLQMDNLESRVALECKEAFAELQTDIHELTSDLDGA) adopt a coiled-coil conformation. At 1264–1894 (AYKRKSRDAD…QVVDTMALSS (631 aa)) the chain is on the cytoplasmic side.

Belongs to the plexin family. Interacts directly with NRP1 and NRP2. Interacts with PLXN1B. Interacts with FARP2, RND1 and KDR/VEGFR2. Binding of SEMA3A leads to dissociation of FARP2. Interacts with CRMP1, DPYSL2/CRMP2, DPYSL3/CRMP3 and DPYSL4/CRMP4. Interacts (via TIG domains) with TREM2; the interaction mediates SEMA6D binding and signaling through TYROBP. As to expression, ubiquitous.

Its subcellular location is the cell membrane. In terms of biological role, coreceptor for SEMA3A, SEMA3C, SEMA3F and SEMA6D. Necessary for signaling by class 3 semaphorins and subsequent remodeling of the cytoskeleton. Plays a role in axon guidance, invasive growth and cell migration. Class 3 semaphorins bind to a complex composed of a neuropilin and a plexin. The plexin modulates the affinity of the complex for specific semaphorins, and its cytoplasmic domain is required for the activation of down-stream signaling events in the cytoplasm. Acts as coreceptor of TREM2 for SEMA6D in dendritic cells and is involved in the generation of immune responses and skeletal homeostasis. In Mus musculus (Mouse), this protein is Plexin-A1 (Plxna1).